Reading from the N-terminus, the 293-residue chain is sn-glycerol-3-phosphate transport system permease protein UgpA (293 aa).

The next 6 membrane-spanning stretches (helical) occupy residues 10 to 30 (ILPY…FFWP), 72 to 92 (VTVI…LLLA), 108 to 128 (MMIM…LFMF), 156 to 176 (MLLV…LFFV), 204 to 224 (IVFP…TVYA), and 261 to 281 (LGSS…LTAF). The region spanning 66–282 (YLNSLKVTVI…VIVIALTAFQ (217 aa)) is the ABC transmembrane type-1 domain.

Belongs to the binding-protein-dependent transport system permease family. As to quaternary structure, the complex is composed of two ATP-binding proteins (UgpC), two transmembrane proteins (UgpA and UgpE) and a solute-binding protein (UgpB).

The protein resides in the cell inner membrane. Functionally, part of the ABC transporter complex UgpBAEC involved in sn-glycerol-3-phosphate (G3P) import. Probably responsible for the translocation of the substrate across the membrane. This is sn-glycerol-3-phosphate transport system permease protein UgpA (ugpA) from Agrobacterium fabrum (strain C58 / ATCC 33970) (Agrobacterium tumefaciens (strain C58)).